We begin with the raw amino-acid sequence, 247 residues long: Putative 2-succinyl-6-hydroxy-2,4-cyclohexadiene-1-carboxylate synthase (247 aa).

In terms of domain architecture, AB hydrolase-1 spans Ile-4–Asn-229.

The protein belongs to the AB hydrolase superfamily. MenH family. As to quaternary structure, monomer.

It catalyses the reaction 5-enolpyruvoyl-6-hydroxy-2-succinyl-cyclohex-3-ene-1-carboxylate = (1R,6R)-6-hydroxy-2-succinyl-cyclohexa-2,4-diene-1-carboxylate + pyruvate. The protein operates within quinol/quinone metabolism; 1,4-dihydroxy-2-naphthoate biosynthesis; 1,4-dihydroxy-2-naphthoate from chorismate: step 3/7. Its pathway is quinol/quinone metabolism; menaquinone biosynthesis. Catalyzes a proton abstraction reaction that results in 2,5-elimination of pyruvate from 2-succinyl-5-enolpyruvyl-6-hydroxy-3-cyclohexene-1-carboxylate (SEPHCHC) and the formation of 2-succinyl-6-hydroxy-2,4-cyclohexadiene-1-carboxylate (SHCHC). The polypeptide is Putative 2-succinyl-6-hydroxy-2,4-cyclohexadiene-1-carboxylate synthase (Haemophilus influenzae (strain ATCC 51907 / DSM 11121 / KW20 / Rd)).